A 908-amino-acid chain; its full sequence is AdoMet-dependent rRNA methyltransferase SPB1 (908 aa).

S-adenosyl-L-methionine is bound by residues glycine 57, tryptophan 59, aspartate 77, aspartate 93, and aspartate 118. Catalysis depends on lysine 158, which acts as the Proton acceptor. The stretch at 378–422 (MDEEEQITEELQKLQQAKLAKTKRERKRANEKKARELLKLQLNMT) forms a coiled coil. 3 disordered regions span residues 440–513 (IFDL…YDSY), 535–715 (NFDA…DEVK), and 806–841 (AKGR…EKAR). Positions 464-493 (DDGEGMDLASESEEEEDEDEEDDEVLDSDE) are enriched in acidic residues. Residues 535-545 (NFDAWHGIQEK) show a composition bias toward basic and acidic residues. Composition is skewed to acidic residues over residues 546-564 (SDEE…EEGG) and 579-591 (DSSD…EPET). Basic and acidic residues predominate over residues 592–610 (EVPKKIKKVSFEKPARSEK). Composition is skewed to acidic residues over residues 650–678 (DGDD…EDAS) and 685–712 (EGDD…EDQD). Residues 816 to 827 (ARMEKAKKKADG) show a composition bias toward basic and acidic residues.

The protein belongs to the class I-like SAM-binding methyltransferase superfamily. RNA methyltransferase RlmE family. SPB1 subfamily. Component of the nucleolar and nucleoplasmic pre-60S ribosomal particle.

It localises to the nucleus. Its subcellular location is the nucleolus. The enzyme catalyses a ribonucleotide in rRNA + S-adenosyl-L-methionine = a 2'-O-methylribonucleotide in rRNA + S-adenosyl-L-homocysteine + H(+). Its function is as follows. Required for proper assembly of pre-ribosomal particles during the biogenesis of the 60S ribosomal subunit. The chain is AdoMet-dependent rRNA methyltransferase SPB1 from Cryptococcus neoformans var. neoformans serotype D (strain B-3501A) (Filobasidiella neoformans).